Consider the following 249-residue polypeptide: Phosphate import ATP-binding protein PstB 3 (249 aa).

The ABC transporter domain maps to 4-244 (LVINNLDLYY…PQDERTENYI (241 aa)). Position 36-43 (36-43 (GPSGCGKS)) interacts with ATP.

Belongs to the ABC transporter superfamily. Phosphate importer (TC 3.A.1.7) family. In terms of assembly, the complex is composed of two ATP-binding proteins (PstB), two transmembrane proteins (PstC and PstA) and a solute-binding protein (PstS).

The protein resides in the cell membrane. The enzyme catalyses phosphate(out) + ATP + H2O = ADP + 2 phosphate(in) + H(+). Functionally, part of the ABC transporter complex PstSACB involved in phosphate import. Responsible for energy coupling to the transport system. The protein is Phosphate import ATP-binding protein PstB 3 of Streptococcus agalactiae serotype Ia (strain ATCC 27591 / A909 / CDC SS700).